Here is a 533-residue protein sequence, read N- to C-terminus: Zinc finger protein 26 (533 aa).

In terms of domain architecture, KRAB spans 14–85 (LSFKDISMEF…NAKISRQSCP (72 aa)). C2H2-type zinc fingers lie at residues 174–196 (CVCSECGKAFRCKSQLIVHLRIH), 202–224 (YECSKCERAFSAKSNLNAHQRVH), 230–252 (YSCSECEKVFSFRSQLIVHQEIH), 258–280 (YGCSECGKAYSWKSQLLLHQRSH), 286–308 (YECSECGKAFSLKSPFVVHQRTH), 314–336 (HKCSECGKAFRSKSYLLVHIRMH), 342–364 (YQCSDCGKAFNMKTQLIVHQGVH), 370–392 (YQCGECGKAFGRKEQLTAHLRAH), 398–420 (YGCSECGKAFSSKSYLVIHRRTH), 426–448 (YECSLCERAFCGKSQLIIHQRTH), 454–476 (YECNECEKAYPRKASLQIHQKTH), 482–504 (FKCSECGKAFTQKSSLSEHQRVH), and 510–532 (WKCSECGKSFCWNSGLRIHRKTH).

It belongs to the krueppel C2H2-type zinc-finger protein family.

The protein resides in the nucleus. In terms of biological role, may be involved in transcriptional regulation. In Homo sapiens (Human), this protein is Zinc finger protein 26 (ZNF26).